A 439-amino-acid chain; its full sequence is Oxysterol-binding protein 6 (439 aa).

Disordered regions lie at residues 1–40 (MSAKVASNKEAPLTEDSVSDLSSDGVEAEGVDQTENSGAD) and 409–439 (ESSTPNLSKVDSSAKIENSIPVDNSIPQTTN). 2 stretches are compositionally biased toward polar residues: residues 409–419 (ESSTPNLSKVD) and 429–439 (PVDNSIPQTTN).

Belongs to the OSBP family.

The protein is Oxysterol-binding protein 6 (osbF) of Dictyostelium discoideum (Social amoeba).